We begin with the raw amino-acid sequence, 313 residues long: Homoserine O-succinyltransferase (313 aa).

The Acyl-thioester intermediate role is filled by C142. Residues K163 and S192 each contribute to the substrate site. H235 serves as the catalytic Proton acceptor. E237 is an active-site residue. Substrate is bound at residue R249.

The protein belongs to the MetA family.

It is found in the cytoplasm. The catalysed reaction is L-homoserine + succinyl-CoA = O-succinyl-L-homoserine + CoA. The protein operates within amino-acid biosynthesis; L-methionine biosynthesis via de novo pathway; O-succinyl-L-homoserine from L-homoserine: step 1/1. Functionally, transfers a succinyl group from succinyl-CoA to L-homoserine, forming succinyl-L-homoserine. In Vibrio campbellii (strain ATCC BAA-1116), this protein is Homoserine O-succinyltransferase.